The following is a 203-amino-acid chain: ATP-dependent Clp protease proteolytic subunit (203 aa).

Residue S100 is the Nucleophile of the active site. Residue H125 is part of the active site.

Belongs to the peptidase S14 family. In terms of assembly, fourteen ClpP subunits assemble into 2 heptameric rings which stack back to back to give a disk-like structure with a central cavity, resembling the structure of eukaryotic proteasomes.

It is found in the cytoplasm. It catalyses the reaction Hydrolysis of proteins to small peptides in the presence of ATP and magnesium. alpha-casein is the usual test substrate. In the absence of ATP, only oligopeptides shorter than five residues are hydrolyzed (such as succinyl-Leu-Tyr-|-NHMec, and Leu-Tyr-Leu-|-Tyr-Trp, in which cleavage of the -Tyr-|-Leu- and -Tyr-|-Trp bonds also occurs).. Functionally, cleaves peptides in various proteins in a process that requires ATP hydrolysis. Has a chymotrypsin-like activity. Plays a major role in the degradation of misfolded proteins. In Anaeromyxobacter sp. (strain K), this protein is ATP-dependent Clp protease proteolytic subunit.